Reading from the N-terminus, the 63-residue chain is Large ribosomal subunit protein eL37 (63 aa).

Residues cysteine 20, cysteine 23, cysteine 35, and cysteine 38 each contribute to the Zn(2+) site. The segment at 20–38 (CRRCGRHSFNVRKGYCVAC) adopts a C4-type zinc-finger fold.

This sequence belongs to the eukaryotic ribosomal protein eL37 family. It depends on Zn(2+) as a cofactor.

Its function is as follows. Binds to the 23S rRNA. This chain is Large ribosomal subunit protein eL37, found in Ignicoccus hospitalis (strain KIN4/I / DSM 18386 / JCM 14125).